The following is a 287-amino-acid chain: 4-hydroxybenzoate octaprenyltransferase (287 aa).

9 helical membrane passes run 21-41 (VGIF…AKGA), 44-64 (FKIA…GCIV), 91-111 (VTEA…LVLL), 112-132 (LNRL…VYPF), 139-159 (LPQL…FAAT), 160-180 (VGHV…WPIV), 211-231 (LMIG…GWYL), 235-255 (YWFY…QFLI), and 263-283 (CFAA…GILL).

It belongs to the UbiA prenyltransferase family. It depends on Mg(2+) as a cofactor.

The protein localises to the cell inner membrane. The catalysed reaction is all-trans-octaprenyl diphosphate + 4-hydroxybenzoate = 4-hydroxy-3-(all-trans-octaprenyl)benzoate + diphosphate. The protein operates within cofactor biosynthesis; ubiquinone biosynthesis. Catalyzes the prenylation of para-hydroxybenzoate (PHB) with an all-trans polyprenyl group. Mediates the second step in the final reaction sequence of ubiquinone-8 (UQ-8) biosynthesis, which is the condensation of the polyisoprenoid side chain with PHB, generating the first membrane-bound Q intermediate 3-octaprenyl-4-hydroxybenzoate. This Coxiella burnetii (strain CbuK_Q154) (Coxiella burnetii (strain Q154)) protein is 4-hydroxybenzoate octaprenyltransferase.